We begin with the raw amino-acid sequence, 93 residues long: Acylphosphatase (93 aa).

One can recognise an Acylphosphatase-like domain in the interval 4 to 91 (TLHLVIHGRV…PAGTGFRVAA (88 aa)). Active-site residues include Arg-19 and Asn-37.

Belongs to the acylphosphatase family.

The catalysed reaction is an acyl phosphate + H2O = a carboxylate + phosphate + H(+). This Azorhizobium caulinodans (strain ATCC 43989 / DSM 5975 / JCM 20966 / LMG 6465 / NBRC 14845 / NCIMB 13405 / ORS 571) protein is Acylphosphatase (acyP).